Here is a 289-residue protein sequence, read N- to C-terminus: ATP synthase mitochondrial F1 complex assembly factor 2 (289 aa).

A mitochondrion-targeting transit peptide spans 1–40; the sequence is MWRIYPRLRDRWRGLLDRRLSDPTVSVWPGPAPQPPARAY. Residue Lys133 is modified to N6-succinyllysine.

This sequence belongs to the ATP12 family. Interacts with ATP5F1B; involved in the assembly of the F1 component of the mitochondrial ATP synthase (ATPase). Interacts with FMC1.

Its subcellular location is the mitochondrion inner membrane. In terms of biological role, plays a role in the assembly of the F1 component of the mitochondrial ATP synthase (ATPase). This chain is ATP synthase mitochondrial F1 complex assembly factor 2, found in Mus musculus (Mouse).